Consider the following 842-residue polypeptide: uncharacterized protein (842 aa).

2 disordered regions span residues 1-20 (MLHF…SPKE) and 142-209 (NSSS…TSSS). The 388-residue stretch at 35 to 422 (TKDVTFRLVL…TAKSFHKCIL (388 aa)) folds into the uDENN FNIP1/2-type domain. A compositionally biased stretch (polar residues) spans 183–209 (ANLSSSSKNMKDSTLSSQKARSNTSSS). The cDENN FNIP1/2-type domain maps to 430–772 (APLIKPSVFS…CYEIHEFPSE (343 aa)). A phosphoserine mark is found at Ser573 and Ser590. The dDENN FNIP1/2-type domain maps to 777–842 (YAPFLLKEHH…KEVLRVCSHC (66 aa)).

Its subcellular location is the cytoplasm. This is an uncharacterized protein from Schizosaccharomyces pombe (strain 972 / ATCC 24843) (Fission yeast).